Here is a 374-residue protein sequence, read N- to C-terminus: 5-hydroxytryptamine receptor 1D (374 aa).

Over 1-35 the chain is Extracellular; the sequence is MSPPNQSLEGLPQEASNRSLNVTGAWDPEVLQALR. Asn-5, Asn-17, and Asn-21 each carry an N-linked (GlcNAc...) asparagine glycan. The chain crosses the membrane as a helical span at residues 36–61; that stretch reads ISLVVVLSVITLATVLSNAFVLTTIL. Residues 62-72 lie on the Cytoplasmic side of the membrane; sequence LTKKLHTPANY. The chain crosses the membrane as a helical span at residues 73–94; sequence LIGSLATTDLLVSILVMPISIA. Topologically, residues 95–106 are extracellular; sequence YTTTRTWNFGQI. Residues 107 to 131 form a helical membrane-spanning segment; sequence LCDIWVSSDITCCTASILHLCVIAL. A disulfide bridge links Cys-108 with Cys-185. 2 residues coordinate serotonin: Asp-115 and Cys-119. A DRY motif; important for ligand-induced conformation changes motif is present at residues 132–134; that stretch reads DRY. The Cytoplasmic segment spans residues 132-151; the sequence is DRYWAITDALEYSKRRTAGH. A helical transmembrane segment spans residues 152 to 173; sequence AAAMIAAVWIISICISIPPLFW. Residues 174–191 are Extracellular-facing; sequence RQATAHEEMSDCLVNTSQ. Residues 192-215 traverse the membrane as a helical segment; that stretch reads ISYTIYSTCGAFYIPSILLIILYG. The Cytoplasmic segment spans residues 216 to 297; that stretch reads RIYVAARSRI…ISAARERKAT (82 aa). A helical membrane pass occupies residues 298 to 323; it reads KTLGIILGAFIICWLPFFVVSLVLPI. Position 318 (Ser-318) interacts with serotonin. Over 324–332 the chain is Extracellular; sequence CRDSCWIHP. The helical transmembrane segment at 333–356 threads the bilayer; sequence ALFDFFTWLGYLNSLINPVIYTVF. The NPxxY motif; important for ligand-induced conformation changes and signaling signature appears at 349–353; sequence NPVIY. At 357-374 the chain is on the cytoplasmic side; the sequence is NEDFRQAFQKVVHFRKIS.

This sequence belongs to the G-protein coupled receptor 1 family. Homodimer. Heterodimer with HTR1B. Detected in the motor column in spinal cord, and in several cranial motor nuclei, including nucleus ambiguous, oculomotoris, trochelaris and abducens. Detected in gamma motor neurons in the lumbar spinal cord. Detected in proprioceptive sensory neurons in dorsal root ganglia.

It localises to the cell membrane. G-protein coupled receptor for 5-hydroxytryptamine (serotonin). Also functions as a receptor for ergot alkaloid derivatives, various anxiolytic and antidepressant drugs and other psychoactive substances. Ligand binding causes a conformation change that triggers signaling via guanine nucleotide-binding proteins (G proteins) and modulates the activity of downstream effectors, such as adenylate cyclase. HTR1D is coupled to G(i)/G(o) G alpha proteins and mediates inhibitory neurotransmission by inhibiting adenylate cyclase activity. Regulates the release of 5-hydroxytryptamine in the brain, and thereby affects neural activity. May also play a role in regulating the release of other neurotransmitters. May play a role in vasoconstriction. The protein is 5-hydroxytryptamine receptor 1D (Htr1d) of Mus musculus (Mouse).